The following is a 469-amino-acid chain: Glutamate--tRNA ligase (469 aa).

The short motif at 9–19 (PSPTGFLHVGG) is the 'HIGH' region element. Residues 236-240 (KLSKR) carry the 'KMSKS' region motif. Residue lysine 239 coordinates ATP.

The protein belongs to the class-I aminoacyl-tRNA synthetase family. Glutamate--tRNA ligase type 1 subfamily. Monomer.

The protein localises to the cytoplasm. It catalyses the reaction tRNA(Glu) + L-glutamate + ATP = L-glutamyl-tRNA(Glu) + AMP + diphosphate. Functionally, catalyzes the attachment of glutamate to tRNA(Glu) in a two-step reaction: glutamate is first activated by ATP to form Glu-AMP and then transferred to the acceptor end of tRNA(Glu). The chain is Glutamate--tRNA ligase from Pseudoalteromonas atlantica (strain T6c / ATCC BAA-1087).